The primary structure comprises 292 residues: 4-hydroxy-tetrahydrodipicolinate synthase (292 aa).

Pyruvate is bound at residue Thr45. Catalysis depends on Tyr133, which acts as the Proton donor/acceptor. The active-site Schiff-base intermediate with substrate is the Lys161. Residue Ile203 participates in pyruvate binding.

Belongs to the DapA family. In terms of assembly, homodimer.

Its subcellular location is the cytoplasm. The catalysed reaction is L-aspartate 4-semialdehyde + pyruvate = (2S,4S)-4-hydroxy-2,3,4,5-tetrahydrodipicolinate + H2O + H(+). The protein operates within amino-acid biosynthesis; L-lysine biosynthesis via DAP pathway; (S)-tetrahydrodipicolinate from L-aspartate: step 3/4. Catalyzes the condensation of (S)-aspartate-beta-semialdehyde [(S)-ASA] and pyruvate to 4-hydroxy-tetrahydrodipicolinate (HTPA). The polypeptide is 4-hydroxy-tetrahydrodipicolinate synthase (Pseudomonas syringae pv. syringae (strain B728a)).